The following is a 488-amino-acid chain: Glutamyl-tRNA(Gln) amidotransferase subunit A (488 aa).

Catalysis depends on charge relay system residues lysine 77 and serine 152. Serine 176 acts as the Acyl-ester intermediate in catalysis.

The protein belongs to the amidase family. GatA subfamily. In terms of assembly, heterotrimer of A, B and C subunits.

It catalyses the reaction L-glutamyl-tRNA(Gln) + L-glutamine + ATP + H2O = L-glutaminyl-tRNA(Gln) + L-glutamate + ADP + phosphate + H(+). Functionally, allows the formation of correctly charged Gln-tRNA(Gln) through the transamidation of misacylated Glu-tRNA(Gln) in organisms which lack glutaminyl-tRNA synthetase. The reaction takes place in the presence of glutamine and ATP through an activated gamma-phospho-Glu-tRNA(Gln). The polypeptide is Glutamyl-tRNA(Gln) amidotransferase subunit A (Streptococcus pneumoniae (strain JJA)).